Here is a 113-residue protein sequence, read N- to C-terminus: Protein NATD1 (113 aa).

Residues 1-16 show a composition bias toward low complexity; the sequence is MAQSPAAASPGAPEQG. The segment at 1–20 is disordered; the sequence is MAQSPAAASPGAPEQGCPIR. The region spanning 22–112 is the N-acetyltransferase domain; that stretch reads EHDRRRRQFT…PLPQYLERLQ (91 aa).

The protein belongs to the NATD1 family.

The chain is Protein NATD1 (NATD1) from Bos taurus (Bovine).